Consider the following 436-residue polypeptide: Mitochondrial substrate carrier family protein Y (436 aa).

Residues 1 to 102 are disordered; sequence MENNNKNINT…NINNNNINKK (102 aa). Over 1-137 the chain is Mitochondrial intermembrane; it reads MENNNKNINT…GGFLAGLSRN (137 aa). Solcar repeat units lie at residues 135–226 and 236–334; these read SRNV…TLKY and HDTL…LKKQ. A helical transmembrane segment spans residues 138–158; that stretch reads VTRIIGSFSSGMAEESAGYPL. Over 159–194 the chain is Mitochondrial matrix; that stretch reads DLIKTRIQLSQSGVSGGGGTNTSIIKIFKDVIKTEG. The helical transmembrane segment at 195-215 threads the bilayer; it reads VIGLFKGLSSPLILSALVTAI. The Mitochondrial intermembrane segment spans residues 216-238; the sequence is QFGLFEDTLKYFRKHQYFKNHDT. Residues 239-259 traverse the membrane as a helical segment; it reads LSLLFSGSIAGFAQSFITCPV. Residues 260 to 313 are Mitochondrial matrix-facing; sequence DLVKIQMQIQGIPSSQPNSNNNNNNNKAKGNSYFTKLIYREKGLLGFYQGLSPT. Residues 314–334 traverse the membrane as a helical segment; it reads LFRDVPGLAIFFTTYETLKKQ. Residues 335–347 lie on the Mitochondrial intermembrane side of the membrane; sequence FGQPELSTQSPTE. The helical transmembrane segment at 348–368 threads the bilayer; it reads FIKSFIPIVLSGGSAGVFYHG. Residues 350–436 form a Solcar 3 repeat; the sequence is KSFIPIVLSG…FLVYEMVINL (87 aa). The Mitochondrial matrix portion of the chain corresponds to 369 to 413; it reads LTHPFDIAKTLIQSDRSATKYKGTFDCLKQVYQNQGPKSLFKGFS. The helical transmembrane segment at 414-434 threads the bilayer; sequence AVAIKSFQSNAVGFLVYEMVI. At 435–436 the chain is on the mitochondrial intermembrane side; the sequence is NL.

It belongs to the mitochondrial carrier (TC 2.A.29) family.

It is found in the mitochondrion inner membrane. Functionally, mitochondrial solute carriers shuttle metabolites, nucleotides, and cofactors through the mitochondrial inner membrane. The polypeptide is Mitochondrial substrate carrier family protein Y (mcfY) (Dictyostelium discoideum (Social amoeba)).